A 116-amino-acid chain; its full sequence is Somatostatin (116 aa).

A signal peptide spans 1-24 (MLSCRLQCALAALSIVLALGGVTG). Positions 25 to 88 (APSDPRLRQF…QDEMRLELQR (64 aa)) are excised as a propeptide. A43 carries the alanine amide modification. A disulfide bond links C105 and C116.

Belongs to the somatostatin family. In terms of processing, C-terminal amidation of the neuronostatin peptide is required for its biological activity, including for the regulation of mean arterial pressure.

Its subcellular location is the secreted. Functionally, inhibits the secretion of pituitary hormones, including that of growth hormone/somatotropin (GH1), PRL, ACTH, luteinizing hormone (LH) and TSH. Also impairs ghrelin- and GnRH-stimulated secretion of GH1 and LH; the inhibition of ghrelin-stimulated secretion of GH1 can be further increased by neuronostatin. In terms of biological role, may enhance low-glucose-induced glucagon release by pancreatic alpha cells. This effect may be mediated by binding to GPR107 and PKA activation. May regulate cardiac contractile function. May compromise cardiomyocyte viability. In the central nervous system, may impair memory retention and may affect hippocampal excitability. May also have anxiolytic and anorexigenic effects. May play a role in arterial pressure regulation. May inhibit basal, but not ghrelin- or GnRH-stimulated secretion of GH1 or LH, but does not affect the release of other pituitary hormones, including PRL, ACTH, FSH or TSH. Potentiates inhibitory action of somatostatin on ghrelin-stimulated secretion of GH1, but not that on GnRH-stimulated secretion of LH. This Bos taurus (Bovine) protein is Somatostatin (SST).